The primary structure comprises 601 residues: DNA replication licensing factor MCM3 (601 aa).

The region spanning 180–386 (PINLLSKSIA…LDRRLSQHVL (207 aa)) is the MCM domain. Position 229 to 236 (229 to 236 (GDPSTAKS)) interacts with ATP. Positions 361–364 (SRFD) match the Arginine finger motif.

It belongs to the MCM family. In terms of assembly, component of the MCM2-7 complex.

Its subcellular location is the nucleus. It is found in the chromosome. The protein localises to the nucleoplasm. It catalyses the reaction ATP + H2O = ADP + phosphate + H(+). Functionally, acts as a component of the MCM2-7 complex (MCM complex) which is the replicative helicase essential for DNA replication initiation and elongation in eukaryotic cells. Required for DNA replication and cell proliferation. The active ATPase sites in the MCM2-7 ring are formed through the interaction surfaces of two neighboring subunits such that a critical structure of a conserved arginine finger motif is provided in trans relative to the ATP-binding site of the Walker A box of the adjacent subunit. This chain is DNA replication licensing factor MCM3, found in Entamoeba histolytica (strain ATCC 30459 / HM-1:IMSS / ABRM).